Here is an 826-residue protein sequence, read N- to C-terminus: Putative ankyrin repeat protein RBE_0220 (826 aa).

ANK repeat units follow at residues 308–337 (LGTSLLAVTVRNNNVELTKALLNKGADQHA), 342–371 (IDMSLLYIACLNKSVDIAKLLLEYNVDPNY), 375–404 (DNDTPLLQACEKKSPELVKALLAKNADPNK), 445–474 (NDFTPLILACYNNSERVVQALLDKEADVNA), 478–507 (DGFTPLFAAYRNHSTKITELLLEKGANPDV), 512–541 (TKSSILYNACNEGDLNIIKLLLKHKANPNL), 545–574 (DGTTPLMAACEKGDLEIAALLLKNGADINK), and 578–607 (NGDNALFLACKNGNLELVKMLVENGVDLKK).

This is Putative ankyrin repeat protein RBE_0220 from Rickettsia bellii (strain RML369-C).